The primary structure comprises 247 residues: MTQLVLIRHGESTWNLENRFTGWTDVELTPTGVAQAQQAGRLLKQAGIDFDTVYTSVLKRAIWTAWHCLDGMDRTWLPVIKDWRLNERHYGGLQGLNKADMAKQFGDEQVLLWRRSYDVPPPPLEANDPRSERSDVRYAKLAANQVPLTECLKDTVARVLPLWYGTLAPAIAAGQRLVIVAHGNSIRALVKHLNNISDADIVGVNIPNGIPLVYDLDANLKPTSKYYLGGADAAAQAASVSALQADG.

Residues 8-15 (RHGESTWN), 21-22 (TG), Arg-60, 87-90 (ERHY), Lys-98, 114-115 (RR), and 183-184 (GN) each bind substrate. The active-site Tele-phosphohistidine intermediate is the His-9. Glu-87 serves as the catalytic Proton donor/acceptor.

It belongs to the phosphoglycerate mutase family. BPG-dependent PGAM subfamily. Homodimer.

It catalyses the reaction (2R)-2-phosphoglycerate = (2R)-3-phosphoglycerate. It functions in the pathway carbohydrate degradation; glycolysis; pyruvate from D-glyceraldehyde 3-phosphate: step 3/5. In terms of biological role, catalyzes the interconversion of 2-phosphoglycerate and 3-phosphoglycerate. The protein is 2,3-bisphosphoglycerate-dependent phosphoglycerate mutase of Methylibium petroleiphilum (strain ATCC BAA-1232 / LMG 22953 / PM1).